The sequence spans 1020 residues: Contactin-1 (1020 aa).

The N-terminal stretch at 1 to 20 is a signal peptide; that stretch reads MKMPLLVSHLLLISLTSCLG. 6 consecutive Ig-like C2-type domains span residues 41–131, 137–223, 241–326, 331–407, 413–500, and 504–603; these read PIFE…ATLS, PFPP…KSVF, PADI…ARIY, PEWV…AELK, PTFE…GTLV, and PTRI…LVVR. 2 disulfides stabilise this stretch: C65-C114 and C158-C211. N-linked (GlcNAc...) asparagine glycans are attached at residues N208 and N258. An intrachain disulfide couples C263 to C310. N338 carries N-linked (GlcNAc...) asparagine glycosylation. 2 disulfide bridges follow: C352–C391 and C436–C484. 4 N-linked (GlcNAc...) asparagine glycosylation sites follow: N457, N473, N494, and N521. A disulfide bond links C526 and C585. N593 is a glycosylation site (N-linked (GlcNAc...) asparagine). Fibronectin type-III domains lie at 608-706, 711-808, 813-908, and 909-1002; these read PPGG…TDGA, APSD…SAQD, APTE…APPS, and QPPR…TLSS. Positions 695 to 719 are disordered; that stretch reads SIPSNRIKTDGAAPNVAPSDVGGGG. N935 carries N-linked (GlcNAc...) asparagine glycosylation. S1001 carries the GPI-anchor amidated serine lipid modification. A propeptide spans 1002-1020 (removed in mature form); it reads SSLLSLLLPSLGFLVYSEF.

This sequence belongs to the immunoglobulin superfamily. Contactin family. As to quaternary structure, monomer. Interacts with CNTNAP1 in cis form. Binds to the carbonic-anhydrase like domain of PTPRZ1. Interacts with NOTCH1 and TNR. Detected in a complex with NRCAM and PTPRB. Interacts with TASOR. In terms of tissue distribution, expressed in the ovary and in Sertoli cells of the testis.

It is found in the cell membrane. Contactins mediate cell surface interactions during nervous system development. Involved in the formation of paranodal axo-glial junctions in myelinated peripheral nerves and in the signaling between axons and myelinating glial cells via its association with CNTNAP1. Participates in oligodendrocytes generation by acting as a ligand of NOTCH1. Its association with NOTCH1 promotes NOTCH1 activation through the released notch intracellular domain (NICD) and subsequent translocation to the nucleus. Interaction with TNR induces a repulsion of neurons and an inhibition of neurite outgrowth. The protein is Contactin-1 (Cntn1) of Mus musculus (Mouse).